The following is a 32-amino-acid chain: Trypsin inhibitor 3 (32 aa).

Intrachain disulfides connect Cys6–Cys23, Cys13–Cys25, and Cys19–Cys31.

This sequence belongs to the protease inhibitor I7 (squash-type serine protease inhibitor) family.

Its subcellular location is the secreted. Its function is as follows. Inhibits trypsin. The chain is Trypsin inhibitor 3 from Cucurbita pepo (Vegetable marrow).